The primary structure comprises 152 residues: FAD synthase (152 aa).

Residues 16–17, 21–24, Asp101, and Tyr129 contribute to the ATP site; these read TF and HPGH.

It belongs to the archaeal FAD synthase family. In terms of assembly, homodimer. The cofactor is a divalent metal cation.

The catalysed reaction is FMN + ATP + H(+) = FAD + diphosphate. It participates in cofactor biosynthesis; FAD biosynthesis; FAD from FMN: step 1/1. Functionally, catalyzes the transfer of the AMP portion of ATP to flavin mononucleotide (FMN) to produce flavin adenine dinucleotide (FAD) coenzyme. This chain is FAD synthase, found in Methanocaldococcus vulcanius (strain ATCC 700851 / DSM 12094 / M7) (Methanococcus vulcanius).